The chain runs to 512 residues: Cytochrome P450 1A1 (512 aa).

Residues 29–40 (SRPRVPKGLKNP) are mitochondrial targeting signal. Ser-67 carries O-linked (GlcNAc) serine glycosylation. A substrate-binding site is contributed by Phe-224. Cys-457 contacts heme.

The protein belongs to the cytochrome P450 family. As to quaternary structure, interacts with cytosolic chaperones HSP70 and HSP90; this interaction is required for initial targeting to mitochondria. Interacts (via mitochondrial targeting signal) with TOMM40 (via N-terminus); this interaction is required for translocation across the mitochondrial outer membrane. Heme is required as a cofactor.

Its subcellular location is the endoplasmic reticulum membrane. It is found in the mitochondrion inner membrane. The protein localises to the microsome membrane. The protein resides in the cytoplasm. It carries out the reaction an organic molecule + reduced [NADPH--hemoprotein reductase] + O2 = an alcohol + oxidized [NADPH--hemoprotein reductase] + H2O + H(+). The catalysed reaction is estrone + reduced [NADPH--hemoprotein reductase] + O2 = 2-hydroxyestrone + oxidized [NADPH--hemoprotein reductase] + H2O + H(+). It catalyses the reaction estrone + reduced [NADPH--hemoprotein reductase] + O2 = 4-hydroxyestrone + oxidized [NADPH--hemoprotein reductase] + H2O + H(+). The enzyme catalyses estrone + reduced [NADPH--hemoprotein reductase] + O2 = 6alpha-hydroxyestrone + oxidized [NADPH--hemoprotein reductase] + H2O + H(+). It carries out the reaction estrone + reduced [NADPH--hemoprotein reductase] + O2 = 15alpha-hydroxyestrone + oxidized [NADPH--hemoprotein reductase] + H2O + H(+). The catalysed reaction is estrone + reduced [NADPH--hemoprotein reductase] + O2 = 16alpha-hydroxyestrone + oxidized [NADPH--hemoprotein reductase] + H2O + H(+). It catalyses the reaction 17beta-estradiol + reduced [NADPH--hemoprotein reductase] + O2 = 2-hydroxy-17beta-estradiol + oxidized [NADPH--hemoprotein reductase] + H2O + H(+). The enzyme catalyses 17beta-estradiol + reduced [NADPH--hemoprotein reductase] + O2 = 4-hydroxy-17beta-estradiol + oxidized [NADPH--hemoprotein reductase] + H2O + H(+). It carries out the reaction 17beta-estradiol + reduced [NADPH--hemoprotein reductase] + O2 = 6alpha-hydroxy-17beta-estradiol + oxidized [NADPH--hemoprotein reductase] + H2O + H(+). The catalysed reaction is 17beta-estradiol + reduced [NADPH--hemoprotein reductase] + O2 = 7alpha-hydroxy-17beta-estradiol + oxidized [NADPH--hemoprotein reductase] + H2O + H(+). It catalyses the reaction 17beta-estradiol + reduced [NADPH--hemoprotein reductase] + O2 = 15alpha-hydroxy-17beta-estradiol + oxidized [NADPH--hemoprotein reductase] + H2O + H(+). The enzyme catalyses (5Z,8Z,11Z)-eicosatrienoate + reduced [NADPH--hemoprotein reductase] + O2 = 19-hydroxy-(5Z,8Z,11Z)-eicosatrienoate + oxidized [NADPH--hemoprotein reductase] + H2O + H(+). It carries out the reaction (5Z,8Z,11Z,14Z)-eicosatetraenoate + reduced [NADPH--hemoprotein reductase] + O2 = 16-hydroxy-(5Z,8Z,11Z,14Z)-eicosatetraenoate + oxidized [NADPH--hemoprotein reductase] + H2O + H(+). The catalysed reaction is (5Z,8Z,11Z,14Z)-eicosatetraenoate + reduced [NADPH--hemoprotein reductase] + O2 = 17-hydroxy-(5Z,8Z,11Z,14Z)-eicosatetraenoate + oxidized [NADPH--hemoprotein reductase] + H2O + H(+). It catalyses the reaction (5Z,8Z,11Z,14Z)-eicosatetraenoate + reduced [NADPH--hemoprotein reductase] + O2 = 18-hydroxy-(5Z,8Z,11Z,14Z)-eicosatetraenoate + oxidized [NADPH--hemoprotein reductase] + H2O + H(+). The enzyme catalyses (5Z,8Z,11Z,14Z)-eicosatetraenoate + reduced [NADPH--hemoprotein reductase] + O2 = 19-hydroxy-(5Z,8Z,11Z,14Z)-eicosatetraenoate + oxidized [NADPH--hemoprotein reductase] + H2O + H(+). It carries out the reaction (5Z,8Z,11Z,14Z,17Z)-eicosapentaenoate + reduced [NADPH--hemoprotein reductase] + O2 = 19-hydroxy-(5Z,8Z,11Z,14Z,17Z)-eicosapentaenoate + oxidized [NADPH--hemoprotein reductase] + H2O + H(+). The catalysed reaction is (5Z,8Z,11Z,14Z)-eicosatetraenoate + reduced [NADPH--hemoprotein reductase] + O2 = (8R,9S)-epoxy-(5Z,11Z,14Z)-eicosatrienoate + oxidized [NADPH--hemoprotein reductase] + H2O + H(+). It catalyses the reaction (5Z,8Z,11Z,14Z)-eicosatetraenoate + reduced [NADPH--hemoprotein reductase] + O2 = (11R,12S)-epoxy-(5Z,8Z,14Z)-eicosatrienoate + oxidized [NADPH--hemoprotein reductase] + H2O + H(+). The enzyme catalyses (5Z,8Z,11Z,14Z)-eicosatetraenoate + reduced [NADPH--hemoprotein reductase] + O2 = (14S,15R)-epoxy-(5Z,8Z,11Z)-eicosatrienoate + oxidized [NADPH--hemoprotein reductase] + H2O + H(+). It carries out the reaction (5Z,8Z,11Z,14Z)-eicosatetraenoate + reduced [NADPH--hemoprotein reductase] + O2 = (14R,15S)-epoxy-(5Z,8Z,11Z)-eicosatrienoate + oxidized [NADPH--hemoprotein reductase] + H2O + H(+). The catalysed reaction is (5Z,8Z,11Z,14Z,17Z)-eicosapentaenoate + reduced [NADPH--hemoprotein reductase] + O2 = (17R,18S)-epoxy-(5Z,8Z,11Z,14Z)-eicosatetraenoate + oxidized [NADPH--hemoprotein reductase] + H2O + H(+). It catalyses the reaction (4Z,7Z,10Z,13Z,16Z,19Z)-docosahexaenoate + reduced [NADPH--hemoprotein reductase] + O2 = (19S,20R)-epoxy-(4Z,7Z,10Z,13Z,16Z)-docosapentaenoate + oxidized [NADPH--hemoprotein reductase] + H2O + H(+). The enzyme catalyses (4Z,7Z,10Z,13Z,16Z,19Z)-docosahexaenoate + reduced [NADPH--hemoprotein reductase] + O2 = (19R,20S)-epoxy-(4Z,7Z,10Z,13Z,16Z)-docosapentaenoate + oxidized [NADPH--hemoprotein reductase] + H2O + H(+). It carries out the reaction all-trans-retinol + reduced [NADPH--hemoprotein reductase] + O2 = all-trans-retinal + oxidized [NADPH--hemoprotein reductase] + 2 H2O + H(+). The catalysed reaction is all-trans-retinal + reduced [NADPH--hemoprotein reductase] + O2 = all-trans-retinoate + oxidized [NADPH--hemoprotein reductase] + H2O + 2 H(+). It catalyses the reaction (13S)-hydroperoxy-(9Z,11E)-octadecadienoate = 13-oxo-(9Z,11E)-octadecadienoate + H2O. The enzyme catalyses (12S)-hydroperoxy-(5Z,8Z,10E,14Z)-eicosatetraenoate = 12-oxo-(5Z,8Z,10E,14Z)-eicosatetraenoate + H2O. It carries out the reaction (15S)-hydroperoxy-(5Z,8Z,11Z,13E)-eicosatetraenoate = 15-oxo-(5Z,8Z,11Z,13E)-eicosatetraenoate + H2O. The catalysed reaction is (5S)-hydroperoxy-(6E,8Z,11Z,14Z)-eicosatetraenoate = 5-oxo-(6E,8Z,11Z,14Z)-eicosatetraenoate + H2O. The protein operates within steroid hormone biosynthesis. It participates in lipid metabolism; fatty acid metabolism. Its pathway is cofactor metabolism; retinol metabolism. In terms of biological role, a cytochrome P450 monooxygenase involved in the metabolism of various endogenous substrates, including fatty acids, steroid hormones and vitamins. Mechanistically, uses molecular oxygen inserting one oxygen atom into a substrate, and reducing the second into a water molecule, with two electrons provided by NADPH via cytochrome P450 reductase (CPR; NADPH-ferrihemoprotein reductase). Catalyzes the hydroxylation of carbon-hydrogen bonds. Exhibits high catalytic activity for the formation of hydroxyestrogens from estrone (E1) and 17beta-estradiol (E2), namely 2-hydroxy E1 and E2, as well as D-ring hydroxylated E1 and E2 at the C15alpha and C16alpha positions. Displays different regioselectivities for polyunsaturated fatty acids (PUFA) hydroxylation. Catalyzes the epoxidation of double bonds of certain PUFA. Converts arachidonic acid toward epoxyeicosatrienoic acid (EET) regioisomers, 8,9-, 11,12-, and 14,15-EET, that function as lipid mediators in the vascular system. Displays an absolute stereoselectivity in the epoxidation of eicosapentaenoic acid (EPA) producing the 17(R),18(S) enantiomer. May play an important role in all-trans retinoic acid biosynthesis in extrahepatic tissues. Catalyzes two successive oxidative transformation of all-trans retinol to all-trans retinal and then to the active form all-trans retinoic acid. May also participate in eicosanoids metabolism by converting hydroperoxide species into oxo metabolites (lipoxygenase-like reaction, NADPH-independent). This Macaca mulatta (Rhesus macaque) protein is Cytochrome P450 1A1 (CYP1A1).